The following is a 205-amino-acid chain: MLKLKFNEEGLIPVIAQDYRTGEVRMLAYANEEAIKKTLETGYAHYYSRSRKKIWKKGETSGELQKVIEVRVDCDEDALIYVIEQEKDRACHTGERNCFFRDIEGNKVEKPLPFEVLPRLQDVIREKIERKEENSYTAKLVSQGKERVFQKFGEEAVETLIALMKGEKEEVIYESADMLYTFLVSLSVSGIDIKEVMEELIRRFK.

The segment at 1 to 116 (MLKLKFNEEG…KVEKPLPFEV (116 aa)) is phosphoribosyl-AMP cyclohydrolase. A phosphoribosyl-ATP pyrophosphohydrolase region spans residues 117 to 205 (LPRLQDVIRE…VMEELIRRFK (89 aa)).

The protein in the N-terminal section; belongs to the PRA-CH family. It in the C-terminal section; belongs to the PRA-PH family.

It localises to the cytoplasm. It carries out the reaction 1-(5-phospho-beta-D-ribosyl)-ATP + H2O = 1-(5-phospho-beta-D-ribosyl)-5'-AMP + diphosphate + H(+). The enzyme catalyses 1-(5-phospho-beta-D-ribosyl)-5'-AMP + H2O = 1-(5-phospho-beta-D-ribosyl)-5-[(5-phospho-beta-D-ribosylamino)methylideneamino]imidazole-4-carboxamide. It functions in the pathway amino-acid biosynthesis; L-histidine biosynthesis; L-histidine from 5-phospho-alpha-D-ribose 1-diphosphate: step 2/9. It participates in amino-acid biosynthesis; L-histidine biosynthesis; L-histidine from 5-phospho-alpha-D-ribose 1-diphosphate: step 3/9. This Aquifex aeolicus (strain VF5) protein is Histidine biosynthesis bifunctional protein HisIE (hisI).